The following is a 37-amino-acid chain: Large ribosomal subunit protein bL36c (37 aa).

It belongs to the bacterial ribosomal protein bL36 family.

The protein localises to the plastid. The protein resides in the chloroplast. The sequence is that of Large ribosomal subunit protein bL36c from Acorus calamus (Sweet flag).